The sequence spans 275 residues: Membrane protein insertase MisCB (275 aa).

The N-terminal stretch at 1-18 is a signal peptide; that stretch reads MLKTYQKLLAMGIFLIVL. Residue Cys-19 is the site of N-palmitoyl cysteine attachment. Residue Cys-19 is the site of S-diacylglycerol cysteine attachment. 5 consecutive transmembrane segments (helical) span residues 63-83, 139-159, 172-192, 219-239, and 240-260; these read YGLSIILVTIIVRIVVLPLFV, AMGCLPMLIQSPIMIGLYYAI, WFSLGQSDILMSLSAGIMYFV, LMVFIFPVMMTIFSLNVPAAL, and PLYWFTSGLFLTVQNIVLQMT.

It belongs to the OXA1/ALB3/YidC family. Type 2 subfamily. In terms of assembly, mostly monomeric, it may also form dimers. Interacts with SpoIIIAE. Forms a complex with the F(1)F(0) ATP synthase in which can be found the alpha, beta, gamma, delta and epsilon subunits of F(1) and a, b and subunits of F(0). YqgA is found in the same complex.

It localises to the cell membrane. Required for the insertion and/or proper folding and/or complex formation of integral membrane proteins into the membrane. Involved in integration of membrane proteins that insert both dependently and independently of the Sec translocase complex, as well as at least some lipoproteins. Also involved in protein secretion processes. It has an overlapping, although partly distinct, function compared to SpoIIIJ(MisCB). In Bacillus subtilis (strain 168), this protein is Membrane protein insertase MisCB (misCB).